Reading from the N-terminus, the 748-residue chain is Cytosolic phospholipase A2 (748 aa).

The interval Met1–Ser178 is phospholipid binding. The C2 domain maps to Pro6–Phe124. Residues Asp40, Thr41, Asp43, Asn65, Asp93, Ala94, and Asn95 each contribute to the Ca(2+) site. The PLA2c domain maps to Val138–Asn740. The active-site Nucleophile is Ser228. Residues Ser431–Ser459 form a disordered region. Polar residues predominate over residues Asn449–Ser459. Position 505 is a phosphoserine; by MAPK (Ser505). Asp549 serves as the catalytic Proton acceptor.

Post-translationally, activated by phosphorylation on a serine residue.

The protein resides in the cytoplasm. Its subcellular location is the cytoplasmic vesicle. It catalyses the reaction a 1,2-diacyl-sn-glycero-3-phosphocholine + H2O = a 1-acyl-sn-glycero-3-phosphocholine + a fatty acid + H(+). It carries out the reaction a 1-acyl-sn-glycero-3-phosphocholine + H2O = sn-glycerol 3-phosphocholine + a fatty acid + H(+). Its activity is regulated as follows. Stimulated by agonists such as ATP, EGF, thrombin and bradykinin as well as by cytosolic Ca(2+). Selectively hydrolyzes arachidonyl phospholipids in the sn-2 position releasing arachidonic acid. Together with its lysophospholipid activity, it is implicated in the initiation of the inflammatory response. The polypeptide is Cytosolic phospholipase A2 (PLA2G4A) (Gallus gallus (Chicken)).